Consider the following 310-residue polypeptide: Glutaminase (310 aa).

Ser67, Asn118, Glu161, Asn168, Tyr192, Tyr244, and Val262 together coordinate substrate.

This sequence belongs to the glutaminase family. In terms of assembly, homotetramer.

The enzyme catalyses L-glutamine + H2O = L-glutamate + NH4(+). This Legionella pneumophila (strain Lens) protein is Glutaminase.